The sequence spans 333 residues: DNA-directed RNA polymerase subunit alpha (333 aa).

Residues 1-234 (MQSSVNEFLT…QQLAAFVDLK (234 aa)) are alpha N-terminal domain (alpha-NTD). Positions 248–333 (IDPILLRPVD…SLKKDDKATA (86 aa)) are alpha C-terminal domain (alpha-CTD).

It belongs to the RNA polymerase alpha chain family. Homodimer. The RNAP catalytic core consists of 2 alpha, 1 beta, 1 beta' and 1 omega subunit. When a sigma factor is associated with the core the holoenzyme is formed, which can initiate transcription.

It catalyses the reaction RNA(n) + a ribonucleoside 5'-triphosphate = RNA(n+1) + diphosphate. Functionally, DNA-dependent RNA polymerase catalyzes the transcription of DNA into RNA using the four ribonucleoside triphosphates as substrates. The chain is DNA-directed RNA polymerase subunit alpha from Pseudomonas aeruginosa (strain UCBPP-PA14).